A 971-amino-acid polypeptide reads, in one-letter code: Isoleucine--tRNA ligase (971 aa).

A 'HIGH' region motif is present at residues 60–70; that stretch reads PYANGDLHIGH. Glu563 lines the L-isoleucyl-5'-AMP pocket. The 'KMSKS' region motif lies at 604 to 608; the sequence is KMSKS. An ATP-binding site is contributed by Lys607. 4 residues coordinate Zn(2+): Cys922, Cys925, Cys942, and Cys945.

Belongs to the class-I aminoacyl-tRNA synthetase family. IleS type 1 subfamily. In terms of assembly, monomer. Requires Zn(2+) as cofactor.

The protein localises to the cytoplasm. The enzyme catalyses tRNA(Ile) + L-isoleucine + ATP = L-isoleucyl-tRNA(Ile) + AMP + diphosphate. Its function is as follows. Catalyzes the attachment of isoleucine to tRNA(Ile). As IleRS can inadvertently accommodate and process structurally similar amino acids such as valine, to avoid such errors it has two additional distinct tRNA(Ile)-dependent editing activities. One activity is designated as 'pretransfer' editing and involves the hydrolysis of activated Val-AMP. The other activity is designated 'posttransfer' editing and involves deacylation of mischarged Val-tRNA(Ile). The chain is Isoleucine--tRNA ligase from Acaryochloris marina (strain MBIC 11017).